The following is a 218-amino-acid chain: Nucleoid occlusion factor SlmA (218 aa).

Positions 30–90 (ERRQQVLTVL…ALIEHIESTL (61 aa)) constitute an HTH tetR-type domain. The segment at residues 53–72 (TTARLAKEVGVSEAALYRYF) is a DNA-binding region (H-T-H motif).

The protein belongs to the nucleoid occlusion factor SlmA family. In terms of assembly, homodimer. Interacts with FtsZ.

The protein resides in the cytoplasm. Its subcellular location is the nucleoid. Functionally, required for nucleoid occlusion (NO) phenomenon, which prevents Z-ring formation and cell division over the nucleoid. Acts as a DNA-associated cell division inhibitor that binds simultaneously chromosomal DNA and FtsZ, and disrupts the assembly of FtsZ polymers. SlmA-DNA-binding sequences (SBS) are dispersed on non-Ter regions of the chromosome, preventing FtsZ polymerization at these regions. The protein is Nucleoid occlusion factor SlmA of Haemophilus influenzae (strain PittGG).